We begin with the raw amino-acid sequence, 916 residues long: Inter-alpha-trypsin inhibitor heavy chain H4 (916 aa).

The N-terminal stretch at 1-27 (MKTPAPGRIHSIVLVLLSLAVLQTSKA) is a signal peptide. The VIT domain maps to 28–149 (QKVQNDIDIY…KVTFELVYEE (122 aa)). 2 N-linked (GlcNAc...) asparagine glycosylation sites follow: asparagine 82 and asparagine 208. One can recognise a VWFA domain in the interval 275-458 (NVIFVIDKSG…LQLQDFYQEV (184 aa)). Asparagine 518 carries an N-linked (GlcNAc...) asparagine glycan. Disordered regions lie at residues 597–616 (PEGQ…ESRG) and 678–701 (PLAP…TDFR). The span at 678-689 (PLAPASAPSPTS) shows a compositional bias: low complexity. O-linked (GalNAc...) serine glycosylation is present at serine 683. O-linked (GalNAc...) threonine glycans are attached at residues threonine 705, threonine 706, and threonine 708. The cysteines at positions 733 and 911 are disulfide-linked.

The protein belongs to the ITIH family. Interacts (via C-terminus) with DNAJC1 (via SANT 2 domain). Appears to be both N- and O-glycosylated.

Its subcellular location is the secreted. Functionally, type II acute-phase protein (APP) involved in inflammatory responses to trauma. May also play a role in liver development or regeneration. This is Inter-alpha-trypsin inhibitor heavy chain H4 (ITIH4) from Bos taurus (Bovine).